The primary structure comprises 211 residues: Wound-induced protein WIN2 (211 aa).

An N-terminal signal peptide occupies residues 1–25 (MVKLSCGPILLALVLCISLTSVANA). Residues 26-68 (QQCGRQRGGALCGNNLCCSQFGWCGSTPEYCSPSQGCQSQCTG) form the Chitin-binding type-1 domain. 4 disulfides stabilise this stretch: Cys-28–Cys-43, Cys-37–Cys-49, Cys-42–Cys-56, and Cys-62–Cys-66. A Barwin domain is found at 77-198 (GSAQNVRATY…VNYQFVNCGD (122 aa)).

The protein is Wound-induced protein WIN2 (WIN2) of Solanum tuberosum (Potato).